The following is a 501-amino-acid chain: MKKVILVVIDGLGLRSEIHGNAFQMANTPFFDKLFSEYPNTLIQASGEYVGLPDGQIGNSEVGHLNIGAGRVVYTGLSLINKALKDDKFKENQVFLNAFNKVKENNSTLHLMGLLSPGGVHSLEAHLFEILKQAHNSGVENVAVHVFGDGRDVAPKSIRESLEKLQELVDKYGYKIATISGRFYSMDRDKMFDRTEKAYKAILGKSGNEFSSALEYLDLQYSQNITDEFLEPAKNSTLDSRYFLKDNDAVIFFNFRPDRARQLSHLILNSSLYDYQPSHLVKVSDFVSMMKYEGIKCNIAYEEMLVNNPIGKVFEDANKTQLRVAETQKYAHVTYFMDGGVDVEYKNSKRIMVDSLKVESYADTPQMSAEEITSQVISHAKDFDLTILNYANPDMVGHTGVLESTLVALEVLDKQLSRLVKWAEKNKITVFITADHGNAEVMLDENNKPVTKHTSSPVMLVTSDKSLKLKPGKLANIAPTVLDYMGMAKPKEMNENSLLDK.

2 residues coordinate Mn(2+): Asp10 and Ser60. Ser60 (phosphoserine intermediate) is an active-site residue. Substrate contacts are provided by residues His121, 151–152 (RD), Arg182, Arg188, 256–259 (RPDR), and Lys329. Positions 394, 398, 435, 436, and 453 each coordinate Mn(2+).

The protein belongs to the BPG-independent phosphoglycerate mutase family. Monomer. It depends on Mn(2+) as a cofactor.

The enzyme catalyses (2R)-2-phosphoglycerate = (2R)-3-phosphoglycerate. Its pathway is carbohydrate degradation; glycolysis; pyruvate from D-glyceraldehyde 3-phosphate: step 3/5. Its function is as follows. Catalyzes the interconversion of 2-phosphoglycerate and 3-phosphoglycerate. The protein is 2,3-bisphosphoglycerate-independent phosphoglycerate mutase of Mycoplasmopsis synoviae (strain 53) (Mycoplasma synoviae).